A 342-amino-acid polypeptide reads, in one-letter code: Foldase protein PrsA (342 aa).

The first 22 residues, 1–22, serve as a signal peptide directing secretion; it reads MVSVKKIVASALVGVLMFSAVG. The N-palmitoyl cysteine moiety is linked to residue Cys-23. Cys-23 carries the S-diacylglycerol cysteine lipid modification. The PpiC domain occupies 190-284; sequence AKGVLARHLL…FGYHIIQAGA (95 aa).

It belongs to the PrsA family.

The protein resides in the cell membrane. The enzyme catalyses [protein]-peptidylproline (omega=180) = [protein]-peptidylproline (omega=0). Plays a major role in protein secretion by helping the post-translocational extracellular folding of several secreted proteins. In Clostridium perfringens (strain SM101 / Type A), this protein is Foldase protein PrsA.